Here is a 59-residue protein sequence, read N- to C-terminus: Large ribosomal subunit protein uL30 (59 aa).

Belongs to the universal ribosomal protein uL30 family. Part of the 50S ribosomal subunit.

This chain is Large ribosomal subunit protein uL30, found in Ruminiclostridium cellulolyticum (strain ATCC 35319 / DSM 5812 / JCM 6584 / H10) (Clostridium cellulolyticum).